The primary structure comprises 276 residues: Putative phosphoenolpyruvate synthase regulatory protein (276 aa).

156–163 (GVSRSGKT) lines the ADP pocket.

It belongs to the pyruvate, phosphate/water dikinase regulatory protein family. PSRP subfamily.

It carries out the reaction [pyruvate, water dikinase] + ADP = [pyruvate, water dikinase]-phosphate + AMP + H(+). The enzyme catalyses [pyruvate, water dikinase]-phosphate + phosphate + H(+) = [pyruvate, water dikinase] + diphosphate. Bifunctional serine/threonine kinase and phosphorylase involved in the regulation of the phosphoenolpyruvate synthase (PEPS) by catalyzing its phosphorylation/dephosphorylation. The sequence is that of Putative phosphoenolpyruvate synthase regulatory protein from Acidovorax ebreus (strain TPSY) (Diaphorobacter sp. (strain TPSY)).